The following is a 64-amino-acid chain: DNA-binding protein 7a (64 aa).

N6-methyllysine; partial occurs at positions 5 and 7.

Belongs to the 7 kDa DNA-binding/endoribonuclease P2 family. Homodimer. Lys-5 and Lys-7 were found to be 60% monomethylated. In terms of processing, ADP-ribosylated by endogenous proteins in vitro.

Functionally, can constrain negative DNA supercoils. May be involved in maintaining the integrity of the genome at high temperature. Has RNA endonuclease activity with a narrow substrate specificity; the cleavage products are 3'-phosphooligonucleotides. This chain is DNA-binding protein 7a (sso7a1), found in Saccharolobus solfataricus (strain ATCC 35092 / DSM 1617 / JCM 11322 / P2) (Sulfolobus solfataricus).